A 242-amino-acid polypeptide reads, in one-letter code: Glutathione S-transferase 3 (242 aa).

In terms of domain architecture, GST N-terminal spans 1-79 (MIVLHHLKNS…HLVRKYGPSF (79 aa)). Positions 85-234 (DVAELEKYEL…ERYSHPPTPP (150 aa)) constitute a GST C-terminal domain. At S228 the chain carries Phosphoserine. T232 bears the Phosphothreonine mark.

It belongs to the GST superfamily. As to quaternary structure, interacts with sad1.

Its subcellular location is the cytoplasm. The catalysed reaction is RX + glutathione = an S-substituted glutathione + a halide anion + H(+). May have a role in the detoxification of various heavy metals. This Schizosaccharomyces pombe (strain 972 / ATCC 24843) (Fission yeast) protein is Glutathione S-transferase 3 (gst3).